Here is a 123-residue protein sequence, read N- to C-terminus: Large ribosomal subunit protein bL17 (123 aa).

The protein belongs to the bacterial ribosomal protein bL17 family. Part of the 50S ribosomal subunit. Contacts protein L32.

This is Large ribosomal subunit protein bL17 from Borrelia garinii subsp. bavariensis (strain ATCC BAA-2496 / DSM 23469 / PBi) (Borreliella bavariensis).